Here is a 392-residue protein sequence, read N- to C-terminus: Stilbene synthase 3 (392 aa).

55 to 58 (KFNR) serves as a coordination point for substrate. Residue Cys164 is part of the active site. Substrate contacts are provided by residues Leu267 and 305–307 (GGP).

Belongs to the thiolase-like superfamily. Chalcone/stilbene synthases family. Homodimer.

The protein localises to the cytoplasm. It carries out the reaction 4-coumaroyl-CoA + 3 malonyl-CoA + 3 H(+) = trans-resveratrol + 4 CO2 + 4 CoA. Its pathway is phytoalexin biosynthesis; 3,4',5-trihydroxystilbene biosynthesis; 3,4',5-trihydroxystilbene from trans-4-coumarate: step 2/2. Its function is as follows. Mediates resistance to pathogens which are sensitive to stilbenes. The polypeptide is Stilbene synthase 3 (Vitis vinifera (Grape)).